Here is a 37-residue protein sequence, read N- to C-terminus: Large ribosomal subunit protein bL36c (37 aa).

It belongs to the bacterial ribosomal protein bL36 family.

It is found in the plastid. It localises to the chloroplast. The polypeptide is Large ribosomal subunit protein bL36c (Psilotum nudum (Whisk fern)).